Reading from the N-terminus, the 340-residue chain is Extracellular matrix protein-binding protein emp (340 aa).

The first 26 residues, 1–26, serve as a signal peptide directing secretion; it reads MKKKLLVLTMSTLFATQIMNSNHAKA.

It localises to the cell surface. Adhesin that binds to the host cell extracellular matrix proteins fibronectin, fibrinogen, collagen, and vitronectin. In Staphylococcus aureus (strain MSSA476), this protein is Extracellular matrix protein-binding protein emp (emp).